The chain runs to 879 residues: Prostaglandin F2 receptor negative regulator (879 aa).

The first 25 residues, 1 to 25 (MGRLASRPLLLALLSLALCRGRVVR), serve as a signal peptide directing secretion. Ig-like C2-type domains are found at residues 26-129 (VPTA…ATVQ) and 149-268 (PSAR…KAVE). At 26 to 832 (VPTATLVRVV…MDVLNAFKYP (807 aa)) the chain is on the extracellular side. Intrachain disulfides connect Cys-43-Cys-119 and Cys-169-Cys-247. N-linked (GlcNAc...) asparagine glycosylation is present at Asn-44. Thr-271 carries the phosphothreonine modification. Ig-like C2-type domains lie at 276–394 (PSVL…EAVS), 406–536 (PDYQ…DVFS), 544–662 (ALED…AWSP), and 688–813 (PIFN…AEIH). N-linked (GlcNAc...) asparagine glycans are attached at residues Asn-286, Asn-300, Asn-383, and Asn-413. Cys-299 and Cys-373 are oxidised to a cystine. Residues 424-427 (PTEL) carry the Endoplasmic reticulum retention signal motif. The cysteines at positions 429 and 515 are disulfide-linked. 4 N-linked (GlcNAc...) asparagine glycosylation sites follow: Asn-525, Asn-600, Asn-618, and Asn-691. Cys-571 and Cys-655 are joined by a disulfide. A Cell attachment site motif is present at residues 703–705 (RGD). Cysteines 711 and 793 form a disulfide. The chain crosses the membrane as a helical span at residues 833–853 (LLIGVGLSTVIGLLSCLIGYC). The Cytoplasmic segment spans residues 854–879 (SSHWCCKKEVQETRRERRRLMSMEMD).

As to quaternary structure, interacts with CD9 and CD81. Part of a complex composed of CD9, CD81 and IGSF8. Also seems to interact with CD63, CD82 and CD151.

The protein resides in the endoplasmic reticulum membrane. Its subcellular location is the golgi apparatus. It is found in the trans-Golgi network membrane. In terms of biological role, inhibits the binding of prostaglandin F2-alpha (PGF2-alpha) to its specific FP receptor, by decreasing the receptor number rather than the affinity constant. Functional coupling with the prostaglandin F2-alpha receptor seems to occur. In myoblasts, associates with tetraspanins CD9 and CD81 to prevent myotube fusion during muscle regeneration. The sequence is that of Prostaglandin F2 receptor negative regulator (PTGFRN) from Homo sapiens (Human).